Here is a 459-residue protein sequence, read N- to C-terminus: Protein king tubby (459 aa).

Residues 114-205 (HELEDEESSP…SNGAGGESEG (92 aa)) are disordered. A compositionally biased stretch (polar residues) spans 123–155 (PVTVIEQQQTAPHSANSTHSQRPSTTRQPSFND). Phosphoserine is present on S152.

It belongs to the TUB family.

The protein localises to the cytoplasm. The protein resides in the nucleus. Its subcellular location is the cell projection. It localises to the cilium membrane. It is found in the rhabdomere. In Drosophila persimilis (Fruit fly), this protein is Protein king tubby.